Consider the following 246-residue polypeptide: E3 ubiquitin-protein ligase MARCHF2 (246 aa).

The RING-CH-type zinc finger occupies 56–116 (DTPSDGPFCR…ELCHTEFAVE (61 aa)). Residues 56-116 (DTPSDGPFCR…ELCHTEFAVE (61 aa)) are required for inhibition of HIV-1 virus production and VSV G protein expression. Residues C64, C67, C80, C82, H90, C93, C106, and C109 each coordinate Zn(2+). Residues 121–246 (PLTEWLKDPG…LKKVAEETPV (126 aa)) form a required for interaction with IKBKG region. 2 helical membrane-spanning segments follow: residues 138–158 (LCCD…SGWL) and 175–195 (AVGL…WTLV).

In terms of assembly, interacts with STX6; the interaction promotes MARCHF2-mediated ubiquitination and degradation of CFTR. Interacts with MARCHF3. Interacts with GOPC/CAL; the interaction leads to CFTR ubiquitination and degradation. Interacts with CFTR; the interaction leads to CFTR ubiqtuitination and degradation. Interacts (via PDZ domain) with DLG1 (via PDZ domains); the interaction leads to DLG1 ubiqtuitination and degradation. Interacts with ERGIC3. Interacts with ADRB2. Interacts with IKBKG/NEMO; during the late stages of macrophage viral and bacterial infection; the interaction leads to ubiquitination and degradation of IKBKG/NEMO. As to expression, broadly expressed.

The protein resides in the endoplasmic reticulum membrane. The protein localises to the lysosome membrane. It is found in the endosome membrane. Its subcellular location is the golgi apparatus membrane. It localises to the cytoplasm. The protein resides in the cell membrane. It catalyses the reaction S-ubiquitinyl-[E2 ubiquitin-conjugating enzyme]-L-cysteine + [acceptor protein]-L-lysine = [E2 ubiquitin-conjugating enzyme]-L-cysteine + N(6)-ubiquitinyl-[acceptor protein]-L-lysine.. It functions in the pathway protein modification; protein ubiquitination. Functionally, E3 ubiquitin-protein ligase that may mediate ubiquitination of TFRC and CD86, and promote their subsequent endocytosis and sorting to lysosomes via multivesicular bodies. E3 ubiquitin ligases accept ubiquitin from an E2 ubiquitin-conjugating enzyme in the form of a thioester and then directly transfer the ubiquitin to targeted substrates. Together with GOPC/CAL mediates the ubiquitination and lysosomal degradation of CFTR. Ubiquitinates and therefore mediates the degradation of DLG1. Regulates the intracellular trafficking and secretion of alpha1-antitrypsin/SERPINA1 and HP/haptoglobin via ubiquitination and degradation of the cargo receptor ERGIC3. Negatively regulates the antiviral and antibacterial immune response by repression of the NF-kB and type 1 IFN signaling pathways, via MARCHF2-mediated K48-linked polyubiquitination of IKBKG/NEMO, resulting in its proteasomal degradation. May be involved in endosomal trafficking through interaction with STX6. In terms of biological role, (Microbial infection) Positively regulates the degradation of Vesicular stomatitis virus (VSV) G protein via the lysosomal degradation pathway. Represses HIV-1 viral production and may inhibit the translocation of HIV-1 env to the cell surface, resulting in decreased viral cell-cell transmission. The sequence is that of E3 ubiquitin-protein ligase MARCHF2 from Homo sapiens (Human).